The chain runs to 202 residues: Protein-methionine-sulfoxide reductase heme-binding subunit MsrQ (202 aa).

6 consecutive transmembrane segments (helical) span residues 8–28, 50–70, 76–96, 114–134, 148–168, and 174–194; these read YAWL…FLLW, LALI…WLGW, IRKA…GIYL, PFIT…LTSG, LLHR…WWGV, and GPLL…KTPA.

Belongs to the MsrQ family. In terms of assembly, heterodimer of a catalytic subunit (MsrP) and a heme-binding subunit (MsrQ). It depends on FMN as a cofactor. Heme b is required as a cofactor.

The protein resides in the cell membrane. Part of the MsrPQ system that repairs oxidized cell envelope proteins containing methionine sulfoxide residues (Met-O), using respiratory chain electrons. Thus protects these proteins from oxidative-stress damage caused by reactive species of oxygen and chlorine. MsrPQ is essential for the maintenance of envelope integrity under bleach stress, rescuing a wide series of structurally unrelated cell envelope proteins from methionine oxidation. MsrQ provides electrons for reduction to the reductase catalytic subunit MsrP, using the quinone pool of the respiratory chain. The chain is Protein-methionine-sulfoxide reductase heme-binding subunit MsrQ from Deinococcus radiodurans (strain ATCC 13939 / DSM 20539 / JCM 16871 / CCUG 27074 / LMG 4051 / NBRC 15346 / NCIMB 9279 / VKM B-1422 / R1).